Consider the following 458-residue polypeptide: MNISQIPLQVEALIPEITLTGFASLILLAGLLKLKNEVLVWSSVLFLVIFAFFIPSFEGEAFNGMFLNDFLTIYLKLIIIIGTIISLLVLTSYLKEKLIRFNESIAFILFSALGMMLLVSARELISFFLSFELMSLSIYVLVGIRRYDVKSNEAAVKYFMLGGFSSAIMLFGIAFIYGATNTTELSLILKVISNYNPLILIGLGLFIVGLCFKIALVPFHMWAPDVYEGAPTPVTAFISTLPKVAILGAFGRVLVEIFRDYYIDWSNFLIVLSIATMATGNFFALIQKNIKRMLAYSSIAHAGYIIIGVIVGTQSGFNSVVAYMFIYTLMNIGAFAMVIAFNEESIENYKGLHKFHPALAIAMLIFMFSLTGVPPTAGFIVKFNIFLQAVKAGFTWLVVIAVIFTVISAYYYLRIVMYMYMKEPVKLPEPIYSRELEVAILICTIGVTFLGILPLFLI.

Helical transmembrane passes span 12–32, 37–57, 70–90, 101–121, 124–144, 159–179, 199–219, 230–250, 266–286, 293–313, 321–341, 361–381, 393–413, and 438–458; these read ALIP…AGLL, EVLV…IPSF, FLTI…LLVL, FNES…LVSA, LISF…LVGI, FMLG…IYGA, ILIG…LVPF, APTP…LGAF, SNFL…FALI, MLAY…IVGT, VAYM…VIAF, IAML…GFIV, GFTW…YYYL, and VAIL…LFLI.

This sequence belongs to the complex I subunit 2 family. In terms of assembly, NDH-1 is composed of 14 different subunits. Subunits NuoA, H, J, K, L, M, N constitute the membrane sector of the complex.

It localises to the cell inner membrane. It catalyses the reaction a quinone + NADH + 5 H(+)(in) = a quinol + NAD(+) + 4 H(+)(out). In terms of biological role, NDH-1 shuttles electrons from NADH, via FMN and iron-sulfur (Fe-S) centers, to quinones in the respiratory chain. The immediate electron acceptor for the enzyme in this species is believed to be ubiquinone. Couples the redox reaction to proton translocation (for every two electrons transferred, four hydrogen ions are translocated across the cytoplasmic membrane), and thus conserves the redox energy in a proton gradient. In Thermodesulfovibrio yellowstonii (strain ATCC 51303 / DSM 11347 / YP87), this protein is NADH-quinone oxidoreductase subunit N 1.